Reading from the N-terminus, the 84-residue chain is Polyketide-8 synthase acyl carrier protein 1 (84 aa).

One can recognise a Carrier domain in the interval 7–82 (AARKQEIKEI…GVYVVVSEAA (76 aa)). Ser42 is subject to O-(pantetheine 4'-phosphoryl)serine.

In terms of processing, 4'-phosphopantetheine is transferred from CoA to a specific serine of the apo-ACP-like protein.

Its function is as follows. Acyl carrier protein. This Streptomyces avermitilis (strain ATCC 31267 / DSM 46492 / JCM 5070 / NBRC 14893 / NCIMB 12804 / NRRL 8165 / MA-4680) protein is Polyketide-8 synthase acyl carrier protein 1.